The primary structure comprises 218 residues: Attacin-B (218 aa).

The first 17 residues, 1–17 (MQKTSILILALFAIAEA), serve as a signal peptide directing secretion. A propeptide spanning residues 18–28 (VPTTGPIRVRR) is cleaved from the precursor.

It belongs to the attacin/sarcotoxin-2 family. As to expression, hemolymph (at protein level).

It localises to the secreted. In terms of biological role, hemolymph antibacterial protein. The protein is Attacin-B (AttB) of Drosophila melanogaster (Fruit fly).